The sequence spans 232 residues: MTKHGKRIRGILKSYDFSKSYSLQEAIDILKQCPTVRFDQTVDVSIKLGIDPKKSDQQIRGSVSLPNGTGKTLKILVFAAGEKAKEALDAGADFVGSDDLVERIKGGWVDFDVAVATPDMMREVGKLGKVLGPRNLMPTPKAGTVTMDVTKAIAELRKGKIEFKADRAGVCNAGVGKLSFDRNLLKENIEALCSALIKAKPPAAKGQYLVSFTVSSTMGPGISVDTRELMAS.

This sequence belongs to the universal ribosomal protein uL1 family. Part of the 50S ribosomal subunit.

Binds directly to 23S rRNA. The L1 stalk is quite mobile in the ribosome, and is involved in E site tRNA release. In terms of biological role, protein L1 is also a translational repressor protein, it controls the translation of the L11 operon by binding to its mRNA. This Chlamydia caviae (strain ATCC VR-813 / DSM 19441 / 03DC25 / GPIC) (Chlamydophila caviae) protein is Large ribosomal subunit protein uL1.